A 101-amino-acid chain; its full sequence is MMLEHELVLSAYLFSIGIYGLITSRNMVRALMCLELILNAVNMNLVTFSDLFDSRQLKGDIFSIFVIAIAAAEAAIGPAIVSSIYRNRRSTRINQSNLLNK.

The next 3 helical transmembrane spans lie at M2–I22, M32–F52, and I61–V81.

Belongs to the complex I subunit 4L family. As to quaternary structure, NDH is composed of at least 16 different subunits, 5 of which are encoded in the nucleus.

Its subcellular location is the plastid. It is found in the chloroplast thylakoid membrane. It catalyses the reaction a plastoquinone + NADH + (n+1) H(+)(in) = a plastoquinol + NAD(+) + n H(+)(out). It carries out the reaction a plastoquinone + NADPH + (n+1) H(+)(in) = a plastoquinol + NADP(+) + n H(+)(out). Its function is as follows. NDH shuttles electrons from NAD(P)H:plastoquinone, via FMN and iron-sulfur (Fe-S) centers, to quinones in the photosynthetic chain and possibly in a chloroplast respiratory chain. The immediate electron acceptor for the enzyme in this species is believed to be plastoquinone. Couples the redox reaction to proton translocation, and thus conserves the redox energy in a proton gradient. In Ceratophyllum demersum (Rigid hornwort), this protein is NAD(P)H-quinone oxidoreductase subunit 4L, chloroplastic.